We begin with the raw amino-acid sequence, 281 residues long: Ribosomal RNA small subunit methyltransferase A (281 aa).

Residues N18, L20, G45, E66, D91, and N118 each contribute to the S-adenosyl-L-methionine site.

The protein belongs to the class I-like SAM-binding methyltransferase superfamily. rRNA adenine N(6)-methyltransferase family. RsmA subfamily.

It is found in the cytoplasm. The catalysed reaction is adenosine(1518)/adenosine(1519) in 16S rRNA + 4 S-adenosyl-L-methionine = N(6)-dimethyladenosine(1518)/N(6)-dimethyladenosine(1519) in 16S rRNA + 4 S-adenosyl-L-homocysteine + 4 H(+). Its function is as follows. Specifically dimethylates two adjacent adenosines (A1518 and A1519) in the loop of a conserved hairpin near the 3'-end of 16S rRNA in the 30S particle. May play a critical role in biogenesis of 30S subunits. The polypeptide is Ribosomal RNA small subunit methyltransferase A (Histophilus somni (strain 129Pt) (Haemophilus somnus)).